A 326-amino-acid polypeptide reads, in one-letter code: Adenosine receptor A1 (326 aa).

Residues 1–10 (MPPSISAFQA) lie on the Extracellular side of the membrane. Residues 11–33 (AYIGIEVLIALVSVPGNVLVIWA) form a helical membrane-spanning segment. At 34 to 46 (VKVNQALRDATFC) the chain is on the cytoplasmic side. Residues 47-69 (FIVSLAVADVAVGALVIPLAILI) form a helical membrane-spanning segment. The Extracellular portion of the chain corresponds to 70-80 (NIGPQTYFHTC). Cysteines 80 and 169 form a disulfide. Residues 81–102 (LMVACPVLILTQSSILALLAIA) form a helical membrane-spanning segment. The Cytoplasmic segment spans residues 103-123 (VDRYLRVKIPLRYKMVVTPRR). The helical transmembrane segment at 124-146 (AAVAIAGCWILSFVVGLTPMFGW) threads the bilayer. Topologically, residues 147–176 (NNLSAVERAWAANGSMGEPVIKCEFEKVIS) are extracellular. Asparagine 159 is a glycosylation site (N-linked (GlcNAc...) asparagine). The helical transmembrane segment at 177–201 (MEYMVYFNFFVWVLPPLLLMVLIYL) threads the bilayer. Residues 202 to 235 (EVFYLIRKQLNKKVSASSGDPQKYYGKELKIAKS) are Cytoplasmic-facing. A helical transmembrane segment spans residues 236 to 259 (LALILFLFALSWLPLHILNCITLF). Over 260–267 (CPSCHKPS) the chain is Extracellular. Residues 268 to 292 (ILTYIAIFLTHGNSAMNPIVYAFRI) form a helical membrane-spanning segment. The Cytoplasmic portion of the chain corresponds to 293–326 (QKFRVTFLKIWNDHFRCQPAPPIDEDLPEERPDD). Cysteine 309 is lipidated: S-palmitoyl cysteine.

The protein belongs to the G-protein coupled receptor 1 family.

It is found in the cell membrane. Its function is as follows. Receptor for adenosine. The activity of this receptor is mediated by G proteins which inhibit adenylyl cyclase. The polypeptide is Adenosine receptor A1 (ADORA1) (Homo sapiens (Human)).